Reading from the N-terminus, the 430-residue chain is MKEQHNALQLMMLGLQHMLAMYAGAILVPLIVGAAIGLNAGQLTYLIAIDLFMCGAATLLQLWRNRYFGIGLPVVLGCTFTAVGPMISIGSTYGVPAIYGAIIAAGLIVVLAAGFFGKLVRFFPPVVTGSVVMIIGISLIPTAMNNLAGGEGSKEFGSLDNVLLGFGVTAFILLLFYFFKGFIRSIAILLGLIAGTAAAYFMGKVDFSEVLEASWLHVPSLFYFGPPTFELPAVVTMLLVAIVSLVESTGVYFALADITNRRLSEKDLEKGYRAEGLAILLGGLFNAFPYTAFSQNVGIVQLSKMKSVNVIAITGIILVAIGLVPKAAALTTVIPTPVLGGAMIVMFGMVISYGIKMLSSVDLDSQGNLLIIASSVSLGLGATTVPALFSSLSGAASVLAGSGIVIGSLTAIALHAFFQTKQPNSADIKT.

The next 14 membrane-spanning stretches (helical) occupy residues 18 to 38 (MLAM…AIGL), 43 to 63 (LTYL…LQLW), 67 to 87 (YFGI…GPMI), 97 to 117 (AIYG…GFFG), 122 to 142 (FFPP…LIPT), 163 to 183 (LLGF…KGFI), 185 to 205 (SIAI…MGKV), 209 to 229 (EVLE…PPTF), 233 to 253 (AVVT…GVYF), 274 to 294 (AEGL…TAFS), 310 to 330 (VIAI…AAAL), 333 to 353 (VIPT…VISY), 369 to 389 (LLII…PALF), and 398 to 418 (VLAG…HAFF).

It belongs to the nucleobase:cation symporter-2 (NCS2) (TC 2.A.40) family.

Its subcellular location is the cell membrane. Its function is as follows. Uptake of uric acid. This chain is Uric acid permease PucK (pucK), found in Bacillus subtilis (strain 168).